A 646-amino-acid chain; its full sequence is Chaperone protein DnaK (646 aa).

The residue at position 198 (Thr198) is a Phosphothreonine; by autocatalysis. Residues 603-646 (EQAQQAGGAEGFDPNAFQGGDAGQQKADDGVVDAEFTEVKDDKK) are disordered. Residues 618–627 (AFQGGDAGQQ) are compositionally biased toward low complexity.

This sequence belongs to the heat shock protein 70 family.

Its function is as follows. Acts as a chaperone. This is Chaperone protein DnaK from Acinetobacter baumannii (strain ACICU).